A 308-amino-acid chain; its full sequence is Ornithine carbamoyltransferase (308 aa).

Carbamoyl phosphate-binding positions include 50–53 (STRT), Gln-77, Arg-101, and 128–131 (HPCQ). L-ornithine-binding positions include Asn-160, Asp-224, and 228 to 229 (SM). Residues 264–265 (CL) and Arg-292 each bind carbamoyl phosphate.

It belongs to the aspartate/ornithine carbamoyltransferase superfamily. OTCase family.

Its subcellular location is the cytoplasm. It catalyses the reaction carbamoyl phosphate + L-ornithine = L-citrulline + phosphate + H(+). The protein operates within amino-acid biosynthesis; L-arginine biosynthesis; L-arginine from L-ornithine and carbamoyl phosphate: step 1/3. In terms of biological role, reversibly catalyzes the transfer of the carbamoyl group from carbamoyl phosphate (CP) to the N(epsilon) atom of ornithine (ORN) to produce L-citrulline. This is Ornithine carbamoyltransferase from Mycobacterium ulcerans (strain Agy99).